Consider the following 146-residue polypeptide: Snaclec coagulation factor IX/factor X-binding protein subunit B2 (146 aa).

An N-terminal signal peptide occupies residues 1–23 (MGRLIFVSFGLLVVFLSLSGTAA). 3 cysteine pairs are disulfide-bonded: cysteine 25-cysteine 36, cysteine 53-cysteine 142, and cysteine 119-cysteine 134. Residues 32 to 143 (YEGHCYKPFN…CRMMANFVCE (112 aa)) form the C-type lectin domain.

This sequence belongs to the snaclec family. Heterodimer of subunits A and B2; disulfide-linked. Expressed by the venom gland.

Its subcellular location is the secreted. In terms of biological role, anticoagulant protein which binds to the gamma-carboxyglutamic acid-domain regions of factors IX (F9) and factor X (F10) in the presence of calcium with a 1 to 1 stoichiometry. This Trimeresurus stejnegeri (Chinese green tree viper) protein is Snaclec coagulation factor IX/factor X-binding protein subunit B2.